A 1145-amino-acid chain; its full sequence is Probable ATP-dependent RNA helicase DHX34 (1145 aa).

Residues 1–14 are compositionally biased toward basic and acidic residues; that stretch reads MPPPRTREGRGHRD. The disordered stretch occupies residues 1 to 27; it reads MPPPRTREGRGHRDRDHHRAPREEEAP. In terms of domain architecture, Helicase ATP-binding spans 174-334; that stretch reads LQTLKEHQVV…FSHAPVVQVP (161 aa). 187 to 194 lines the ATP pocket; sequence GDTGCGKS. The short motif at 281–284 is the DEAH box element; it reads DEVH. The Helicase C-terminal domain occupies 370 to 538; that stretch reads AIDNKYPPEE…ALVLQMKSMS (169 aa). Disordered regions lie at residues 726–764 and 1091–1114; these read LKRQHEEGGGRRRKVLRLQEDGCSSDEEDRKGSTSQRAD and NTCPEAPGDDPGSEEAAPAPPQKT. Phosphoserine occurs at positions 749 and 750.

This sequence belongs to the DEAD box helicase family. DEAH subfamily. In terms of assembly, forms a complex with RUVBL1 and RUVBL2. Part of a complex composed of SMG1, DHX34 and UPF1; within the complex DHX34 acts as a scaffolding protein to facilitate SMG1 phosphorylation of UPF1. Interacts with UPF1, MOV10, EIF4A3, XRN2, SMG6, SMG7, SMG9, UPF3A, UPF3B, CASC3/MLN51, XRN1, DIS3 and DCP1A; the interactions are RNA-independent. Interacts with NCBP1/CPB80; the interaction is RNA-dependent. Interacts (via C-terminus) with SMG1; the interaction is RNA-independent.

The enzyme catalyses ATP + H2O = ADP + phosphate + H(+). Probable ATP-binding RNA helicase. Required for nonsense-mediated decay (NMD) degradation of mRNA transcripts containing premature stop codons. Promotes the phosphorylation of UPF1 along with its interaction with key NMD pathway proteins UPF2 and EIF4A3. Negatively regulates the nucleotide binding ability and ATP hydrolysis of the RUVBL1-RUVBL2 complex via induction of N-terminus conformation changes of the RUVBL2 subunits. The sequence is that of Probable ATP-dependent RNA helicase DHX34 from Mus musculus (Mouse).